Reading from the N-terminus, the 292-residue chain is Hemin import ATP-binding protein HmuV (292 aa).

The region spanning 38-271 (LRADGIAVTR…ELLTRVYGHP (234 aa)) is the ABC transporter domain. ATP is bound at residue 70 to 77 (GPNGAGKS).

Belongs to the ABC transporter superfamily. Heme (hemin) importer (TC 3.A.1.14.5) family. The complex is composed of two ATP-binding proteins (HmuV), two transmembrane proteins (HmuU) and a solute-binding protein (HmuT).

Its subcellular location is the cell membrane. In terms of biological role, part of the ABC transporter complex HmuTUV involved in hemin import. Responsible for energy coupling to the transport system. The protein is Hemin import ATP-binding protein HmuV of Rhodococcus jostii (strain RHA1).